Reading from the N-terminus, the 314-residue chain is Ribosomal RNA small subunit methyltransferase H (314 aa).

Residues G31–Y33, D49, F76, D118, and Q125 contribute to the S-adenosyl-L-methionine site.

This sequence belongs to the methyltransferase superfamily. RsmH family.

The protein localises to the cytoplasm. It carries out the reaction cytidine(1402) in 16S rRNA + S-adenosyl-L-methionine = N(4)-methylcytidine(1402) in 16S rRNA + S-adenosyl-L-homocysteine + H(+). Specifically methylates the N4 position of cytidine in position 1402 (C1402) of 16S rRNA. This is Ribosomal RNA small subunit methyltransferase H from Wolbachia pipientis wMel.